We begin with the raw amino-acid sequence, 163 residues long: R-phycoerythrin alpha chain (163 aa).

(2R,3E)-phycoerythrobilin-binding residues include C82 and C139.

It belongs to the phycobiliprotein family. Heterodimer of an alpha and a beta chain. Contains two covalently linked bilin chromophores.

It localises to the plastid. Its subcellular location is the chloroplast thylakoid membrane. Its function is as follows. Light-harvesting photosynthetic bile pigment-protein from the phycobiliprotein complex. The polypeptide is R-phycoerythrin alpha chain (cpeA) (Aglaothamnion neglectum (Red alga)).